A 295-amino-acid polypeptide reads, in one-letter code: UDP-3-O-acyl-N-acetylglucosamine deacetylase (295 aa).

Positions 77, 233, and 237 each coordinate Zn(2+). The active-site Proton donor is His260.

Belongs to the LpxC family. Zn(2+) is required as a cofactor.

It carries out the reaction a UDP-3-O-[(3R)-3-hydroxyacyl]-N-acetyl-alpha-D-glucosamine + H2O = a UDP-3-O-[(3R)-3-hydroxyacyl]-alpha-D-glucosamine + acetate. The protein operates within glycolipid biosynthesis; lipid IV(A) biosynthesis; lipid IV(A) from (3R)-3-hydroxytetradecanoyl-[acyl-carrier-protein] and UDP-N-acetyl-alpha-D-glucosamine: step 2/6. In terms of biological role, catalyzes the hydrolysis of UDP-3-O-myristoyl-N-acetylglucosamine to form UDP-3-O-myristoylglucosamine and acetate, the committed step in lipid A biosynthesis. In Solibacter usitatus (strain Ellin6076), this protein is UDP-3-O-acyl-N-acetylglucosamine deacetylase.